Reading from the N-terminus, the 326-residue chain is Heat-inducible transcription repressor HrcA (326 aa).

It belongs to the HrcA family.

In terms of biological role, negative regulator of class I heat shock genes (grpE-dnaK-dnaJ and groELS operons). Prevents heat-shock induction of these operons. This Staphylococcus saprophyticus subsp. saprophyticus (strain ATCC 15305 / DSM 20229 / NCIMB 8711 / NCTC 7292 / S-41) protein is Heat-inducible transcription repressor HrcA.